The following is a 437-amino-acid chain: tRNA(Ile2) 2-agmatinylcytidine synthetase TiaS (437 aa).

It belongs to the TiaS family.

It localises to the cytoplasm. It catalyses the reaction cytidine(34) in tRNA(Ile2) + agmatine + ATP + H2O = 2-agmatinylcytidine(34) in tRNA(Ile2) + AMP + 2 phosphate + 2 H(+). Functionally, ATP-dependent agmatine transferase that catalyzes the formation of 2-agmatinylcytidine (agm2C) at the wobble position (C34) of tRNA(Ile2), converting the codon specificity from AUG to AUA. This is tRNA(Ile2) 2-agmatinylcytidine synthetase TiaS from Acidilobus saccharovorans (strain DSM 16705 / JCM 18335 / VKM B-2471 / 345-15).